The sequence spans 354 residues: Protein PHLOEM PROTEIN 2-LIKE A8 (354 aa).

The 168-residue stretch at 12 to 179 (TGPQVFINFR…EMILEIQKAL (168 aa)) folds into the TIR domain. Glutamate 86 is an active-site residue.

The enzyme catalyses NAD(+) + H2O = ADP-D-ribose + nicotinamide + H(+). This Arabidopsis thaliana (Mouse-ear cress) protein is Protein PHLOEM PROTEIN 2-LIKE A8 (PP2A8).